Reading from the N-terminus, the 492-residue chain is ATP synthase subunit beta, chloroplastic (492 aa).

An ATP-binding site is contributed by 170–177 (GGAGVGKT).

This sequence belongs to the ATPase alpha/beta chains family. In terms of assembly, F-type ATPases have 2 components, CF(1) - the catalytic core - and CF(0) - the membrane proton channel. CF(1) has five subunits: alpha(3), beta(3), gamma(1), delta(1), epsilon(1). CF(0) has four main subunits: a(1), b(1), b'(1) and c(9-12).

The protein resides in the plastid. It is found in the chloroplast thylakoid membrane. It catalyses the reaction ATP + H2O + 4 H(+)(in) = ADP + phosphate + 5 H(+)(out). Produces ATP from ADP in the presence of a proton gradient across the membrane. The catalytic sites are hosted primarily by the beta subunits. The protein is ATP synthase subunit beta, chloroplastic of Pinus thunbergii (Japanese black pine).